The following is a 167-amino-acid chain: Ribonuclease H (167 aa).

Residues 1–143 (MYKQIEIFTD…CDQLARKAAK (143 aa)) enclose the RNase H type-1 domain. Mg(2+)-binding residues include aspartate 10, glutamate 48, aspartate 70, and aspartate 135.

Belongs to the RNase H family. In terms of assembly, monomer. Mg(2+) serves as cofactor.

The protein resides in the cytoplasm. It catalyses the reaction Endonucleolytic cleavage to 5'-phosphomonoester.. Functionally, endonuclease that specifically degrades the RNA of RNA-DNA hybrids. This chain is Ribonuclease H, found in Blochmanniella floridana.